The chain runs to 675 residues: DNA ligase (675 aa).

NAD(+)-binding positions include 35-39, 84-85, and Glu-115; these read DSEYD and SL. Lys-117 serves as the catalytic N6-AMP-lysine intermediate. Positions 138, 175, 292, and 316 each coordinate NAD(+). Zn(2+) is bound by residues Cys-410, Cys-413, Cys-428, and Cys-434. Residues 593–675 enclose the BRCT domain; it reads QIVQPLLGRT…RNFLDDTSFP (83 aa).

The protein belongs to the NAD-dependent DNA ligase family. LigA subfamily. Mg(2+) is required as a cofactor. It depends on Mn(2+) as a cofactor.

The enzyme catalyses NAD(+) + (deoxyribonucleotide)n-3'-hydroxyl + 5'-phospho-(deoxyribonucleotide)m = (deoxyribonucleotide)n+m + AMP + beta-nicotinamide D-nucleotide.. In terms of biological role, DNA ligase that catalyzes the formation of phosphodiester linkages between 5'-phosphoryl and 3'-hydroxyl groups in double-stranded DNA using NAD as a coenzyme and as the energy source for the reaction. It is essential for DNA replication and repair of damaged DNA. This is DNA ligase from Nitrosococcus oceani (strain ATCC 19707 / BCRC 17464 / JCM 30415 / NCIMB 11848 / C-107).